The chain runs to 763 residues: Hormone-sensitive lipase (763 aa).

An Involved in the stabilization of the negatively charged intermediate by the formation of the oxyanion hole motif is present at residues 350 to 352 (HGG). Ser424 is an active-site residue. Ser552 carries the phosphoserine modification. Phosphoserine; by AMPK is present on Ser554. Phosphoserine occurs at positions 595, 627, and 649. Positions 616–627 (AREEAEAKEGLS) are enriched in basic and acidic residues. A disordered region spans residues 616 to 652 (AREEAEAKEGLSAKDGSSRVSNAFPEGFHPRRTSQGA). Active-site residues include Asp692 and His722.

Belongs to the 'GDXG' lipolytic enzyme family. Monomer and homodimer. Interacts with CAVIN1 in the adipocyte cytoplasm. Interacts with PLIN5. In terms of processing, phosphorylation by AMPK reduces its translocation towards the lipid droplets.

It is found in the cell membrane. The protein resides in the membrane. The protein localises to the caveola. It localises to the cytoplasm. Its subcellular location is the cytosol. It is found in the lipid droplet. The enzyme catalyses a diacylglycerol + H2O = a monoacylglycerol + a fatty acid + H(+). It carries out the reaction a triacylglycerol + H2O = a diacylglycerol + a fatty acid + H(+). The catalysed reaction is a monoacylglycerol + H2O = glycerol + a fatty acid + H(+). It catalyses the reaction Hydrolyzes glycerol monoesters of long-chain fatty acids.. The enzyme catalyses 1,2-di-(9Z-octadecenoyl)-glycerol + (9Z)-octadecenoate + H(+) = 1,2,3-tri-(9Z-octadecenoyl)-glycerol + H2O. It carries out the reaction 2,3-di-(9Z)-octadecenoyl-sn-glycerol + H2O = 2-(9Z-octadecenoyl)-glycerol + (9Z)-octadecenoate + H(+). The catalysed reaction is cholesteryl (9Z-octadecenoate) + H2O = cholesterol + (9Z)-octadecenoate + H(+). It catalyses the reaction 1,2,3-tri-(9Z-octadecenoyl)-glycerol + H2O = di-(9Z)-octadecenoylglycerol + (9Z)-octadecenoate + H(+). The enzyme catalyses all-trans-retinyl hexadecanoate + H2O = all-trans-retinol + hexadecanoate + H(+). It carries out the reaction 1,2-di-(9Z-octadecenoyl)-glycerol + H2O = (9Z-octadecenoyl)-glycerol + (9Z)-octadecenoate + H(+). The catalysed reaction is 2-(5Z,8Z,11Z,14Z-eicosatetraenoyl)-glycerol + H2O = glycerol + (5Z,8Z,11Z,14Z)-eicosatetraenoate + H(+). It catalyses the reaction 1-(9Z-octadecenoyl)-glycerol + H2O = glycerol + (9Z)-octadecenoate + H(+). The enzyme catalyses 2-(9Z-octadecenoyl)-glycerol + H2O = glycerol + (9Z)-octadecenoate + H(+). It carries out the reaction 1-O-hexadecyl-2-acetyl-sn-glycerol + H2O = 1-O-hexadecyl-sn-glycerol + acetate + H(+). The catalysed reaction is 1,2-di-(9Z-octadecenoyl)-sn-glycerol + H2O = (9Z-octadecenoyl)-glycerol + (9Z)-octadecenoate + H(+). It catalyses the reaction 1,3-di-(9Z-octadecenoyl)-glycerol + H2O = 1-(9Z-octadecenoyl)-glycerol + (9Z)-octadecenoate + H(+). The enzyme catalyses 1,2-di-(9Z-octadecenoyl)-glycerol + H2O = 2-(9Z-octadecenoyl)-glycerol + (9Z)-octadecenoate + H(+). The protein operates within glycerolipid metabolism; triacylglycerol degradation. Lipase with broad substrate specificity, catalyzing the hydrolysis of triacylglycerols (TAGs), diacylglycerols (DAGs), monoacylglycerols (MAGs), cholesteryl esters and retinyl esters. Shows a preferential hydrolysis of DAGs over TAGs and MAGs. Preferentially hydrolyzes fatty acid (FA) esters at the sn-3 position of the glycerol backbone in DAGs and FA esters at the sn-1 and sn-2 positions of the glycerol backbone in TAGs. Catalyzes the hydrolysis of 2-arachidonoylglycerol, an endocannabinoid and of 2-acetyl monoalkylglycerol ether, the penultimate precursor of the pathway for de novo synthesis of platelet-activating factor. In adipose tissue and heart, it primarily hydrolyzes stored triglycerides to free fatty acids, while in steroidogenic tissues, it principally converts cholesteryl esters to free cholesterol for steroid hormone production. The sequence is that of Hormone-sensitive lipase (LIPE) from Ictidomys tridecemlineatus (Thirteen-lined ground squirrel).